The sequence spans 247 residues: LHFPL tetraspan subfamily member 4 protein (247 aa).

A run of 4 helical transmembrane segments spans residues 22–42, 97–117, 127–147, and 178–198; these read IGVL…VVFI, FFVL…ALFF, ICAW…MIFP, and ILAI…FVLG.

The protein belongs to the LHFP family. Interacts with GABA(A) receptor subunits. Interacts with GABRB3. Interacts with GABRA2. Interacts with GABRG2. Identified in a complex of 720 kDa composed of LHFPL4, NLGN2, GABRA1, GABRB2, GABRG2 and GABRB3. Interacts with GABRA1. Interacts with NLGN2; leading to mutual regulation of protein level and synaptic clustering.

It is found in the cell projection. The protein localises to the dendrite. Its subcellular location is the postsynaptic cell membrane. Plays a role in the regulation of inhibitory synapse formation and function by being involved in maintening gamma-aminobutyric acid receptors (GABAARs) clustering and their associated scaffold proteins at inhibitory synaptic sites. Acts in concert with NLGN2 to recruit or stabilize GABAARs. The sequence is that of LHFPL tetraspan subfamily member 4 protein from Bos taurus (Bovine).